Reading from the N-terminus, the 300-residue chain is Ribosomal RNA small subunit methyltransferase H (300 aa).

S-adenosyl-L-methionine-binding positions include 36–38, Asp-55, Leu-89, Asp-103, and Gln-110; that span reads GGH.

This sequence belongs to the methyltransferase superfamily. RsmH family.

It is found in the cytoplasm. The enzyme catalyses cytidine(1402) in 16S rRNA + S-adenosyl-L-methionine = N(4)-methylcytidine(1402) in 16S rRNA + S-adenosyl-L-homocysteine + H(+). Functionally, specifically methylates the N4 position of cytidine in position 1402 (C1402) of 16S rRNA. The chain is Ribosomal RNA small subunit methyltransferase H from Thermotoga neapolitana (strain ATCC 49049 / DSM 4359 / NBRC 107923 / NS-E).